The following is an 848-amino-acid chain: Protein translocase subunit SecA (848 aa).

ATP contacts are provided by residues Gln86, 104–108, and Asp508; that span reads GEGKT. Cys833, Cys835, Cys844, and Cys845 together coordinate Zn(2+).

The protein belongs to the SecA family. Monomer and homodimer. Part of the essential Sec protein translocation apparatus which comprises SecA, SecYEG and auxiliary proteins SecDF. Other proteins may also be involved. Zn(2+) serves as cofactor.

Its subcellular location is the cell membrane. It localises to the cytoplasm. It carries out the reaction ATP + H2O + cellular proteinSide 1 = ADP + phosphate + cellular proteinSide 2.. Part of the Sec protein translocase complex. Interacts with the SecYEG preprotein conducting channel. Has a central role in coupling the hydrolysis of ATP to the transfer of proteins into and across the cell membrane, serving as an ATP-driven molecular motor driving the stepwise translocation of polypeptide chains across the membrane. In Caldicellulosiruptor saccharolyticus (strain ATCC 43494 / DSM 8903 / Tp8T 6331), this protein is Protein translocase subunit SecA.